The following is a 231-amino-acid chain: Uracil-DNA glycosylase (231 aa).

The Proton acceptor role is filled by D74.

The protein belongs to the uracil-DNA glycosylase (UDG) superfamily. UNG family.

It localises to the cytoplasm. It catalyses the reaction Hydrolyzes single-stranded DNA or mismatched double-stranded DNA and polynucleotides, releasing free uracil.. Excises uracil residues from the DNA which can arise as a result of misincorporation of dUMP residues by DNA polymerase or due to deamination of cytosine. The chain is Uracil-DNA glycosylase from Campylobacter jejuni subsp. jejuni serotype O:23/36 (strain 81-176).